Consider the following 685-residue polypeptide: Probable cysteine desulfurase (685 aa).

A cargo-loading domain region spans residues 1-282 (MTRSPCSTTS…RDEHEVFDVA (282 aa)). Disordered stretches follow at residues 48–135 (SIRP…TSAG) and 162–185 (PTPA…VPDT). Residues 71–85 (ATAATSAGRTAAGTA) are compositionally biased toward low complexity. Pro residues predominate over residues 102–121 (LPPPASPAPEAPPQAAPPAP). Residues 122–135 (RGSAPDATAATSAG) are compositionally biased toward low complexity. Pro residues predominate over residues 164–178 (PAGPEAPPQSAPPAP). Lys-502 carries the N6-(pyridoxal phosphate)lysine modification. Catalysis depends on Cys-640, which acts as the Cysteine persulfide intermediate.

Belongs to the class-V pyridoxal-phosphate-dependent aminotransferase family. Csd subfamily. Isolated from bacteria in a complex with encapsulin 2A (AC I3NID5), strongly suggesting it is found in a type 2A encapsulin nanocompartment. There are 1-2 copies of this protein in each encapsulin shell. Requires pyridoxal 5'-phosphate as cofactor.

The protein resides in the encapsulin nanocompartment. The protein localises to the cell membrane. The catalysed reaction is (sulfur carrier)-H + L-cysteine = (sulfur carrier)-SH + L-alanine. Its function is as follows. Cargo protein of a type 2A encapsulin nanocompartment involved in sulfur metabolism. Cysteine desulfurases mobilize the sulfur from L-cysteine to yield L-alanine, an essential step in sulfur metabolism for biosynthesis of a variety of sulfur-containing biomolecules. The chain is Probable cysteine desulfurase from Mycolicibacterium paratuberculosis (strain ATCC BAA-968 / K-10) (Mycobacterium paratuberculosis).